The sequence spans 356 residues: 5-formaminoimidazole-4-carboxamide-1-(beta)-D-ribofuranosyl 5'-monophosphate synthetase (356 aa).

His27 and Ser94 together coordinate 5-amino-1-(5-phospho-beta-D-ribosyl)imidazole-4-carboxamide. The ATP-grasp domain maps to 101 to 333 (TENFADMAVP…YADLMEENLS (233 aa)). ATP contacts are provided by residues 145-196 (PHDI…TRYY) and Glu226. Asn255 contributes to the 5-amino-1-(5-phospho-beta-D-ribosyl)imidazole-4-carboxamide binding site. Glu293 and Glu306 together coordinate Mg(2+).

This sequence belongs to the phosphohexose mutase family. Mg(2+) serves as cofactor. The cofactor is Mn(2+).

The enzyme catalyses 5-amino-1-(5-phospho-beta-D-ribosyl)imidazole-4-carboxamide + formate + ATP = 5-formamido-1-(5-phospho-D-ribosyl)imidazole-4-carboxamide + ADP + phosphate. The protein operates within purine metabolism; IMP biosynthesis via de novo pathway; 5-formamido-1-(5-phospho-D-ribosyl)imidazole-4-carboxamide from 5-amino-1-(5-phospho-D-ribosyl)imidazole-4-carboxamide (formate route): step 1/1. Functionally, catalyzes the ATP- and formate-dependent formylation of 5-aminoimidazole-4-carboxamide-1-beta-d-ribofuranosyl 5'-monophosphate (AICAR) to 5-formaminoimidazole-4-carboxamide-1-beta-d-ribofuranosyl 5'-monophosphate (FAICAR) in the absence of folates. The protein is 5-formaminoimidazole-4-carboxamide-1-(beta)-D-ribofuranosyl 5'-monophosphate synthetase of Methanosarcina barkeri (strain Fusaro / DSM 804).